A 96-amino-acid chain; its full sequence is Putative pterin-4-alpha-carbinolamine dehydratase (96 aa).

It belongs to the pterin-4-alpha-carbinolamine dehydratase family.

It carries out the reaction (4aS,6R)-4a-hydroxy-L-erythro-5,6,7,8-tetrahydrobiopterin = (6R)-L-erythro-6,7-dihydrobiopterin + H2O. This is Putative pterin-4-alpha-carbinolamine dehydratase from Paraburkholderia xenovorans (strain LB400).